Here is a 151-residue protein sequence, read N- to C-terminus: Transcriptional repressor NrdR (151 aa).

A zinc finger lies at 3-34 (CPYCGSLDNKVIDSRLSRDDTETRRRRECLEC). The 91-residue stretch at 49–139 (LMIVKKDGRR…VYREFKDVHD (91 aa)) folds into the ATP-cone domain.

Belongs to the NrdR family. Requires Zn(2+) as cofactor.

Negatively regulates transcription of bacterial ribonucleotide reductase nrd genes and operons by binding to NrdR-boxes. The chain is Transcriptional repressor NrdR from Desulfosudis oleivorans (strain DSM 6200 / JCM 39069 / Hxd3) (Desulfococcus oleovorans).